Here is a 194-residue protein sequence, read N- to C-terminus: Ribonuclease HII (194 aa).

The RNase H type-2 domain maps to 3–193 (ILTAGVDEAG…VRNLLAQQAL (191 aa)). Residues D9, E10, and D101 each contribute to the a divalent metal cation site.

It belongs to the RNase HII family. Mn(2+) serves as cofactor. Mg(2+) is required as a cofactor.

The protein localises to the cytoplasm. The enzyme catalyses Endonucleolytic cleavage to 5'-phosphomonoester.. Functionally, endonuclease that specifically degrades the RNA of RNA-DNA hybrids. The sequence is that of Ribonuclease HII (rnhB) from Neisseria meningitidis serogroup B (strain ATCC BAA-335 / MC58).